The sequence spans 129 residues: Small ribosomal subunit protein uS11 (129 aa).

Belongs to the universal ribosomal protein uS11 family. Part of the 30S ribosomal subunit. Interacts with proteins S7 and S18. Binds to IF-3.

Functionally, located on the platform of the 30S subunit, it bridges several disparate RNA helices of the 16S rRNA. Forms part of the Shine-Dalgarno cleft in the 70S ribosome. The polypeptide is Small ribosomal subunit protein uS11 (Nitrosospira multiformis (strain ATCC 25196 / NCIMB 11849 / C 71)).